Here is a 204-residue protein sequence, read N- to C-terminus: Carbon disulfide hydrolase (204 aa).

Residues C35, H88, and C91 each contribute to the Zn(2+) site.

Belongs to the beta-class carbonic anhydrase family. As to quaternary structure, forms a hexadecameric catenane homooligomer, through interactions of two interlocked octameric rings. It depends on Zn(2+) as a cofactor.

The enzyme catalyses carbon disulfide + 2 H2O = 2 hydrogen sulfide + CO2 + 2 H(+). Its pathway is sulfur metabolism; hydrogen sulfide biosynthesis. Functionally, catalyzes the conversion of carbon disulfide into hydrogen sulfide and carbon dioxide, with carbonyl sulfide as an intermediate. Likely plays a key role in sulfur metabolism in S.solfataricus. Does not show carbonic anhydrase activity (hydration of CO(2) to carbonate). The sequence is that of Carbon disulfide hydrolase from Saccharolobus solfataricus (strain ATCC 35092 / DSM 1617 / JCM 11322 / P2) (Sulfolobus solfataricus).